Here is a 222-residue protein sequence, read N- to C-terminus: ATP-dependent Clp protease proteolytic subunit (222 aa).

Ser125 serves as the catalytic Nucleophile. Residue His150 is part of the active site.

Belongs to the peptidase S14 family. As to quaternary structure, fourteen ClpP subunits assemble into 2 heptameric rings which stack back to back to give a disk-like structure with a central cavity, resembling the structure of eukaryotic proteasomes.

Its subcellular location is the cytoplasm. The enzyme catalyses Hydrolysis of proteins to small peptides in the presence of ATP and magnesium. alpha-casein is the usual test substrate. In the absence of ATP, only oligopeptides shorter than five residues are hydrolyzed (such as succinyl-Leu-Tyr-|-NHMec, and Leu-Tyr-Leu-|-Tyr-Trp, in which cleavage of the -Tyr-|-Leu- and -Tyr-|-Trp bonds also occurs).. In terms of biological role, cleaves peptides in various proteins in a process that requires ATP hydrolysis. Has a chymotrypsin-like activity. Plays a major role in the degradation of misfolded proteins. This chain is ATP-dependent Clp protease proteolytic subunit, found in Porphyromonas gingivalis (strain ATCC BAA-308 / W83).